We begin with the raw amino-acid sequence, 126 residues long: Prostate and testis expressed protein 1 (126 aa).

Positions 1–21 (MDKSLLLELPILLCCFRALSG) are cleaved as a signal peptide. Residues 46–125 (VQCRMCHLQF…CRSHDLCNED (80 aa)) enclose the UPAR/Ly6 domain. Intrachain disulfides connect Cys-48-Cys-75, Cys-51-Cys-60, Cys-67-Cys-94, and Cys-98-Cys-115.

Belongs to the PATE family. In terms of tissue distribution, expressed specifically in prostate cancer, normal prostate, and testis. Expressed in the epithelial cells of the prostate cancer and normal prostate tissues.

The protein localises to the secreted. The polypeptide is Prostate and testis expressed protein 1 (PATE1) (Homo sapiens (Human)).